We begin with the raw amino-acid sequence, 477 residues long: Glutamate--tRNA ligase (477 aa).

Residues 8 to 18 (PSPTGTLHIGT) carry the 'HIGH' region motif. The short motif at 247–251 (KLSKR) is the 'KMSKS' region element. Residue Lys250 coordinates ATP.

The protein belongs to the class-I aminoacyl-tRNA synthetase family. Glutamate--tRNA ligase type 1 subfamily. As to quaternary structure, monomer.

The protein resides in the cytoplasm. It carries out the reaction tRNA(Glu) + L-glutamate + ATP = L-glutamyl-tRNA(Glu) + AMP + diphosphate. In terms of biological role, catalyzes the attachment of glutamate to tRNA(Glu) in a two-step reaction: glutamate is first activated by ATP to form Glu-AMP and then transferred to the acceptor end of tRNA(Glu). In Synechococcus sp. (strain CC9605), this protein is Glutamate--tRNA ligase.